The primary structure comprises 174 residues: Crossover junction endodeoxyribonuclease RuvC (174 aa).

Active-site residues include aspartate 8, glutamate 69, and aspartate 141. Positions 8, 69, and 141 each coordinate Mg(2+).

Belongs to the RuvC family. In terms of assembly, homodimer which binds Holliday junction (HJ) DNA. The HJ becomes 2-fold symmetrical on binding to RuvC with unstacked arms; it has a different conformation from HJ DNA in complex with RuvA. In the full resolvosome a probable DNA-RuvA(4)-RuvB(12)-RuvC(2) complex forms which resolves the HJ. Mg(2+) is required as a cofactor.

It localises to the cytoplasm. The catalysed reaction is Endonucleolytic cleavage at a junction such as a reciprocal single-stranded crossover between two homologous DNA duplexes (Holliday junction).. Its function is as follows. The RuvA-RuvB-RuvC complex processes Holliday junction (HJ) DNA during genetic recombination and DNA repair. Endonuclease that resolves HJ intermediates. Cleaves cruciform DNA by making single-stranded nicks across the HJ at symmetrical positions within the homologous arms, yielding a 5'-phosphate and a 3'-hydroxyl group; requires a central core of homology in the junction. The consensus cleavage sequence is 5'-(A/T)TT(C/G)-3'. Cleavage occurs on the 3'-side of the TT dinucleotide at the point of strand exchange. HJ branch migration catalyzed by RuvA-RuvB allows RuvC to scan DNA until it finds its consensus sequence, where it cleaves and resolves the cruciform DNA. The polypeptide is Crossover junction endodeoxyribonuclease RuvC (Xanthomonas oryzae pv. oryzae (strain PXO99A)).